The sequence spans 336 residues: Eukaryotic translation initiation factor 3 subunit I (336 aa).

5 WD repeats span residues 8-47, 50-91, 146-185, 190-229, and 287-326; these read GHER…RLGT, GHLG…KVWE, CNES…QLEN, EFDH…ILKT, and GHFG…FDFM.

It belongs to the eIF-3 subunit I family. Component of the eukaryotic translation initiation factor 3 (eIF-3) complex.

It localises to the cytoplasm. Component of the eukaryotic translation initiation factor 3 (eIF-3) complex, which is involved in protein synthesis of a specialized repertoire of mRNAs and, together with other initiation factors, stimulates binding of mRNA and methionyl-tRNAi to the 40S ribosome. The eIF-3 complex specifically targets and initiates translation of a subset of mRNAs involved in cell proliferation. The protein is Eukaryotic translation initiation factor 3 subunit I (tif34) of Aspergillus terreus (strain NIH 2624 / FGSC A1156).